A 339-amino-acid chain; its full sequence is MRVYYDRDADLNLIKSKKVAIIGYGSQGRAHALNLKDSGAQNVAIALKSGSATAKKAEADGFKVMTVAEAAAWADLMMMATPDELQADIYKADIAGNIRDGAAIAFAHGLNVHFGLIEPKASVDVVMIAPKGPGHTVRGEYQKGGGVPCLVAVHQDASGNALDLALSYACGVGGGRSGIIETNFKEECETDLFGEQVVLCGGLVELIRAGFETLVEAGYAPEMAYFECLHEVKLIVDLIYEGGIANMNYSISNTAEWGEYVTGPRIITEDTKAEMKRVLKDIQTGKFTSEWMQEYRSGAARFKGIRRVNDSHQIEEVGAKLRAMMPWIGKNKLVDKAKN.

Positions 1 to 182 (MRVYYDRDAD…GGGRSGIIET (182 aa)) constitute a KARI N-terminal Rossmann domain. NADP(+)-binding positions include 24–27 (YGSQ), Lys48, Ser51, Thr53, and 83–86 (DELQ). The active site involves His108. NADP(+) is bound at residue Gly134. Residues 183-328 (NFKEECETDL…AKLRAMMPWI (146 aa)) enclose the KARI C-terminal knotted domain. Asp191, Glu195, Glu227, and Glu231 together coordinate Mg(2+). Ser252 lines the substrate pocket.

The protein belongs to the ketol-acid reductoisomerase family. The cofactor is Mg(2+).

It catalyses the reaction (2R)-2,3-dihydroxy-3-methylbutanoate + NADP(+) = (2S)-2-acetolactate + NADPH + H(+). It carries out the reaction (2R,3R)-2,3-dihydroxy-3-methylpentanoate + NADP(+) = (S)-2-ethyl-2-hydroxy-3-oxobutanoate + NADPH + H(+). It participates in amino-acid biosynthesis; L-isoleucine biosynthesis; L-isoleucine from 2-oxobutanoate: step 2/4. It functions in the pathway amino-acid biosynthesis; L-valine biosynthesis; L-valine from pyruvate: step 2/4. Involved in the biosynthesis of branched-chain amino acids (BCAA). Catalyzes an alkyl-migration followed by a ketol-acid reduction of (S)-2-acetolactate (S2AL) to yield (R)-2,3-dihydroxy-isovalerate. In the isomerase reaction, S2AL is rearranged via a Mg-dependent methyl migration to produce 3-hydroxy-3-methyl-2-ketobutyrate (HMKB). In the reductase reaction, this 2-ketoacid undergoes a metal-dependent reduction by NADPH to yield (R)-2,3-dihydroxy-isovalerate. The protein is Ketol-acid reductoisomerase (NADP(+)) of Rhizobium meliloti (strain 1021) (Ensifer meliloti).